A 218-amino-acid chain; its full sequence is Capsid protein (218 aa).

N-acetylmethionine; by host is present on methionine 1. The interval 1–28 is disordered; it reads MDKSESTSVGRNRRRRPRRGSRSAPSSA. Basic residues predominate over residues 11–21; sequence RNRRRRPRRGS.

The protein belongs to the cucumovirus capsid protein family.

It is found in the virion. In terms of biological role, capsid protein. Probably binds RNA and plays a role in packaging. This is Capsid protein from Cucumber mosaic virus (strain E5) (CMV).